The sequence spans 237 residues: Uridylate kinase (237 aa).

Position 11–14 (11–14) interacts with ATP; that stretch reads KLSG. Gly53 contributes to the UMP binding site. Gly54 and Arg58 together coordinate ATP. UMP-binding positions include Asp73 and 134–141; that span reads TGNPFFTT. Thr161, Tyr167, and Asp170 together coordinate ATP.

The protein belongs to the UMP kinase family. In terms of assembly, homohexamer.

It localises to the cytoplasm. The enzyme catalyses UMP + ATP = UDP + ADP. It participates in pyrimidine metabolism; CTP biosynthesis via de novo pathway; UDP from UMP (UMPK route): step 1/1. With respect to regulation, inhibited by UTP. Functionally, catalyzes the reversible phosphorylation of UMP to UDP. This is Uridylate kinase from Burkholderia thailandensis (strain ATCC 700388 / DSM 13276 / CCUG 48851 / CIP 106301 / E264).